The primary structure comprises 176 residues: Translation initiation factor IF-3 (176 aa).

It belongs to the IF-3 family. Monomer.

It is found in the cytoplasm. In terms of biological role, IF-3 binds to the 30S ribosomal subunit and shifts the equilibrium between 70S ribosomes and their 50S and 30S subunits in favor of the free subunits, thus enhancing the availability of 30S subunits on which protein synthesis initiation begins. This Streptococcus thermophilus (strain ATCC BAA-491 / LMD-9) protein is Translation initiation factor IF-3.